Here is a 58-residue protein sequence, read N- to C-terminus: MAVPKRKMSRSNTRVRRSQWKAARPLLTSCPRCRDPKLPHVACPTCGTYSNRQVINPA.

This sequence belongs to the bacterial ribosomal protein bL32 family.

The polypeptide is Large ribosomal subunit protein bL32 (Thermobifida fusca (strain YX)).